The following is a 504-amino-acid chain: DNA-binding protein reb1 (504 aa).

Positions 30–51 (DFDDFPLNKGLKTNNNDYSGSI) are disordered. HTH myb-type domains are found at residues 308–361 (NPFE…RFGD) and 362–422 (KLKR…KAAS). 2 DNA-binding regions (H-T-H motif) span residues 335–357 (WTKIGRKMARMPNDCRDRWRDVV) and 395–418 (WTLVAQMLGTRTRLQCRYKFQQLT).

It is found in the nucleus. In terms of biological role, DNA-binding protein that recognizes sites within both the enhancer and the promoter of rRNA transcription, as well as upstream of many genes transcribed by RNA polymerase II. Has a role in the termination of RNA polymerase I catalyzed transcription. The polypeptide is DNA-binding protein reb1 (reb1) (Schizosaccharomyces pombe (strain 972 / ATCC 24843) (Fission yeast)).